A 302-amino-acid polypeptide reads, in one-letter code: Cyclopropane mycolic acid synthase 2 (302 aa).

Residues 41-42 (YS), 76-84 (LLDIGCGWG), 102-107 (TLSENQ), and 131-132 (WE) each bind S-adenosyl-L-methionine. The active site involves C284.

This sequence belongs to the CFA/CMAS family. As to quaternary structure, homodimer.

It is found in the cytoplasm. The catalysed reaction is a 1-acyl-2-(9Z)-enoyl-sn-glycero-3-phospholipid + S-adenosyl-L-methionine = a 1-acyl-2-(9-cyclopronane)-acyl-sn-glycero-3-phospholipid + S-adenosyl-L-homocysteine + H(+). Its pathway is lipid metabolism; mycolic acid biosynthesis. In terms of biological role, catalyzes the formation of trans cyclopropanated ketomycolate or methoxymycolate through the conversion of a double bond to a cyclopropane ring at the proximal position of an oxygenated mycolic acid via the transfer of a methylene group from S-adenosyl-L-methionine. In the absence of MmaA2, CmaA2 has a non-specific cis-cyclopropanating activity and is able to catalyze the conversion of a double bond to a cis cyclopropane ring at the distal position of an alpha mycolic acid. Cyclopropanated mycolic acids are key factors participating in cell envelope permeability, host immunomodulation and persistence. In Mycobacterium bovis (strain ATCC BAA-935 / AF2122/97), this protein is Cyclopropane mycolic acid synthase 2 (cmaA2).